The chain runs to 211 residues: Large ribosomal subunit protein uL3 (211 aa).

Belongs to the universal ribosomal protein uL3 family. Part of the 50S ribosomal subunit. Forms a cluster with proteins L14 and L19.

Functionally, one of the primary rRNA binding proteins, it binds directly near the 3'-end of the 23S rRNA, where it nucleates assembly of the 50S subunit. This chain is Large ribosomal subunit protein uL3, found in Citrifermentans bemidjiense (strain ATCC BAA-1014 / DSM 16622 / JCM 12645 / Bem) (Geobacter bemidjiensis).